We begin with the raw amino-acid sequence, 710 residues long: U3 small nucleolar RNA-associated protein 4 (710 aa).

WD repeat units lie at residues 11–59, 64–105, 108–147, 154–192, 199–241, 290–327, 328–365, 488–527, and 529–569; these read YTPS…CLKT, GVDR…PLVN, SNAGAIWSIAICDETKTLAVGCDDGSCVLFDISGGPGVIE, RQTSRILSLDFQTKDHLVGGCADGVIKVWDLSTPNSAII, RARK…LSQS, FHSHDVRCMAVFECKSLDVLISGGMDMMLAVIPVRQFN, RKNHRMISAVPQRPRMAVAPKARLFMLWNDHEVLLWRI, SMCDGICSIAVSSDGDYFAVADTVGNIFCYSLSNLTYSEL, and RVNT…LSEW.

Component of the ribosomal small subunit (SSU) processome.

Its subcellular location is the nucleus. It localises to the nucleolus. Functionally, involved in nucleolar processing of pre-18S ribosomal RNA. Required for optimal pre-ribosomal RNA transcription by RNA polymerase I together with a subset of U3 proteins required for transcription (t-UTPs). This chain is U3 small nucleolar RNA-associated protein 4 (utp4), found in Schizosaccharomyces pombe (strain 972 / ATCC 24843) (Fission yeast).